The chain runs to 251 residues: 2,3-bisphosphoglycerate-dependent phosphoglycerate mutase (251 aa).

Substrate contacts are provided by residues 11-18, 24-25, Arg63, 90-93, Lys101, 117-118, and 185-186; these read RHGNSDWN, TG, ERHY, RR, and GN. The active-site Tele-phosphohistidine intermediate is His12. Glu90 acts as the Proton donor/acceptor in catalysis.

It belongs to the phosphoglycerate mutase family. BPG-dependent PGAM subfamily.

It carries out the reaction (2R)-2-phosphoglycerate = (2R)-3-phosphoglycerate. The protein operates within carbohydrate degradation; glycolysis; pyruvate from D-glyceraldehyde 3-phosphate: step 3/5. Its function is as follows. Catalyzes the interconversion of 2-phosphoglycerate and 3-phosphoglycerate. In Clavibacter sepedonicus (Clavibacter michiganensis subsp. sepedonicus), this protein is 2,3-bisphosphoglycerate-dependent phosphoglycerate mutase.